Reading from the N-terminus, the 117-residue chain is Gamma-aminobutyric acid receptor-associated protein (117 aa).

The segment at 1–22 is interaction with beta-tubulin; the sequence is MKFVYKEEHPFEKRRSEGEKIR. The interaction with GABRG2 stretch occupies residues 36-68; the sequence is APKARIGDLDKKKYLVPSDLTVGQFYFLIRKRI. An interaction with GPHN region spans residues 36–117; it reads APKARIGDLD…AYSDESVYGL (82 aa). The segment at 48-50 is interaction with LIR (LC3 nteracting Region) motif of ATG3; it reads KYL. G116 is lipidated: Phosphatidylethanolamine amidated glycine; alternate. Residue G116 is the site of Phosphatidylserine amidated glycine; alternate attachment. L117 is a propeptide (removed in mature form).

It belongs to the ATG8 family. Interacts with GPHN and NSF. Interacts with ATG3, ATG7 and ATG13. Interacts with alpha-tubulin. Interacts with beta-tubulin. Interacts with GABRG2. Interacts with RB1CC1. Interacts with ULK1. Interacts with CALR. Interacts with DDX47. Interacts with TP53INP1 and TP53INP2. Interacts with TBC1D5. Interacts with TBC1D25. Directly interacts with SQSTM1. Interacts with MAPK15. Interacts with TECPR2. Interacts with PCM1. Interacts with TRIM5 and TRIM21. Interacts with MEFV. Interacts with KIF21B. Interacts with WDFY3; this interaction is required for WDFY3 recruitment to MAP1LC3B-positive p62/SQSTM1 bodies. Interacts with FLCN; interaction regulates autophagy. Interacts with UBA5. Interacts with KBTBD6 and KBTBD7; the interaction is direct and required for the ubiquitination of TIAM1. Interacts with reticulophagy regulators RETREG1, RETREG2 and RETREG3. Interacts with IRGM. Interacts with STX17. Interacts with CT55; this interaction may be important for GABARAP protein stability. Interacts with DNM2. Interacts with NCOA4 (via C-terminus). Post-translationally, the precursor molecule is cleaved by ATG4 (ATG4A, ATG4B, ATG4C or ATG4D) to expose the glycine at the C-terminus and form the cytosolic form, GABARAP-I. The processed form is then activated by APG7L/ATG7, transferred to ATG3 and conjugated to phosphatidylethanolamine (PE) phospholipid to form the membrane-bound form, GABARAP-II. During non-canonical autophagy, the processed form is conjugated to phosphatidylserine (PS) phospholipid. ATG4 proteins also mediate the delipidation of PE-conjugated forms. In addition, ATG4B and ATG4D mediate delipidation of ATG8 proteins conjugated to PS during non-canonical autophagy. ATG4B constitutes the major protein for proteolytic activation. ATG4D is the main enzyme for delipidation activity. Expressed in brain (at protein level). Can be found in both somatodendritic and axonal compartment of neurons.

It is found in the cytoplasmic vesicle. The protein localises to the autophagosome membrane. Its subcellular location is the endomembrane system. It localises to the cytoplasm. The protein resides in the cytoskeleton. It is found in the golgi apparatus membrane. Ubiquitin-like modifier that plays a role in intracellular transport of GABA(A) receptors and its interaction with the cytoskeleton. Involved in autophagy: while LC3s are involved in elongation of the phagophore membrane, the GABARAP/GATE-16 subfamily is essential for a later stage in autophagosome maturation. Through its interaction with the reticulophagy receptor TEX264, participates in the remodeling of subdomains of the endoplasmic reticulum into autophagosomes upon nutrient stress, which then fuse with lysosomes for endoplasmic reticulum turnover. Also required for the local activation of the CUL3(KBTBD6/7) E3 ubiquitin ligase complex, regulating ubiquitination a nd degradation of TIAM1, a guanyl-nucleotide exchange factor (GEF) that activates RAC1 and downstream signal transduction. Thereby, regulates different biological processes including the organization of the cytoskeleton, cell migration and proliferation. Involved in apoptosis. This is Gamma-aminobutyric acid receptor-associated protein from Rattus norvegicus (Rat).